Consider the following 365-residue polypeptide: N-glycosylase/DNA lyase OGG1 (365 aa).

The segment covering 1–16 has biased composition (polar residues); the sequence is MKRPRPTSQPSISSTV. Residues 1–24 are disordered; the sequence is MKRPRPTSQPSISSTVKPPLSPPV. 3 residues coordinate DNA: asparagine 162, arginine 167, and arginine 215. The active-site Schiff-base intermediate with DNA is lysine 261. 8-oxoguanine contacts are provided by proline 278 and aspartate 280. Histidine 282 provides a ligand contact to DNA. 8-oxoguanine contacts are provided by glutamine 324 and phenylalanine 328.

Belongs to the type-1 OGG1 family. As to expression, expressed in stems, roots, rosette and cauline leaves, flowers and seeds.

Its subcellular location is the nucleus. It carries out the reaction 2'-deoxyribonucleotide-(2'-deoxyribose 5'-phosphate)-2'-deoxyribonucleotide-DNA = a 3'-end 2'-deoxyribonucleotide-(2,3-dehydro-2,3-deoxyribose 5'-phosphate)-DNA + a 5'-end 5'-phospho-2'-deoxyribonucleoside-DNA + H(+). In terms of biological role, involved in repair of DNA damaged by oxidation by incising DNA at 8-oxoG residues. Excises 7,8-dihydro-8-oxoguanine and 2,6-diamino-4-hydroxy-5-N-methylformamidopyrimidine (Fapy) from damaged DNA. Has a beta-lyase activity that nicks DNA 3' to the lesion. The protein is N-glycosylase/DNA lyase OGG1 (OGG1) of Arabidopsis thaliana (Mouse-ear cress).